We begin with the raw amino-acid sequence, 378 residues long: Cobalt-precorrin-5B C(1)-methyltransferase (378 aa).

It belongs to the CbiD family.

It catalyses the reaction Co-precorrin-5B + S-adenosyl-L-methionine = Co-precorrin-6A + S-adenosyl-L-homocysteine. Its pathway is cofactor biosynthesis; adenosylcobalamin biosynthesis; cob(II)yrinate a,c-diamide from sirohydrochlorin (anaerobic route): step 6/10. Functionally, catalyzes the methylation of C-1 in cobalt-precorrin-5B to form cobalt-precorrin-6A. The protein is Cobalt-precorrin-5B C(1)-methyltransferase of Thermoplasma volcanium (strain ATCC 51530 / DSM 4299 / JCM 9571 / NBRC 15438 / GSS1).